The primary structure comprises 1216 residues: Regulator of telomere elongation helicase 1 (1216 aa).

A Helicase ATP-binding domain is found at 7-295 (KGVTVDFPFQ…TKVAQQAELH (289 aa)). 42–49 (SPTGTGKT) lines the ATP pocket. Positions 144, 162, 171, and 206 each coordinate [4Fe-4S] cluster. Residues 150–166 (KKQESNHMQVHLCRRKV) carry the Nuclear localization signal motif. The short motif at 249-252 (DEAH) is the DEAH box element. The Nuclear localization signal motif lies at 874–880 (QRGRRRK). Disordered regions lie at residues 978-1018 (GCSS…ATRQ) and 1140-1172 (GPGT…RKTQ). A PIP-box motif is present at residues 1172–1179 (QSKISSFL).

Belongs to the helicase family. RAD3/XPD subfamily. As to quaternary structure, interacts with TERF1. Interacts (via PIP-box) with PCNA; the interaction is direct and essential for suppressing telomere fragility. Interacts with MMS19; the interaction mediates the association of RTEL1 with the cytosolic iron-sulfur protein assembly (CIA) complex. Highly expressed in adult testis, liver and ovary.

The protein localises to the nucleus. It carries out the reaction ATP + H2O = ADP + phosphate + H(+). Functionally, a probable ATP-dependent DNA helicase implicated in telomere-length regulation, DNA repair and the maintenance of genomic stability. Acts as an anti-recombinase to counteract toxic recombination and limit crossover during meiosis. Regulates meiotic recombination and crossover homeostasis by physically dissociating strand invasion events and thereby promotes noncrossover repair by meiotic synthesis dependent strand annealing (SDSA) as well as disassembly of D loop recombination intermediates. Also disassembles T loops and prevents telomere fragility by counteracting telomeric G4-DNA structures, which together ensure the dynamics and stability of the telomere. This is Regulator of telomere elongation helicase 1 from Bos taurus (Bovine).